Reading from the N-terminus, the 100-residue chain is Urease subunit gamma (100 aa).

The protein belongs to the urease gamma subunit family. Heterotrimer of UreA (gamma), UreB (beta) and UreC (alpha) subunits. Three heterotrimers associate to form the active enzyme.

It is found in the cytoplasm. The enzyme catalyses urea + 2 H2O + H(+) = hydrogencarbonate + 2 NH4(+). It functions in the pathway nitrogen metabolism; urea degradation; CO(2) and NH(3) from urea (urease route): step 1/1. The sequence is that of Urease subunit gamma from Pseudoalteromonas translucida (strain TAC 125).